The following is a 424-amino-acid chain: Trigger factor (424 aa).

Residues 163–248 form the PPIase FKBP-type domain; that stretch reads GDTVVLDFEG…IHEIKAKELP (86 aa).

Belongs to the FKBP-type PPIase family. Tig subfamily.

It is found in the cytoplasm. The catalysed reaction is [protein]-peptidylproline (omega=180) = [protein]-peptidylproline (omega=0). Its function is as follows. Involved in protein export. Acts as a chaperone by maintaining the newly synthesized protein in an open conformation. Functions as a peptidyl-prolyl cis-trans isomerase. This is Trigger factor from Bacillus licheniformis (strain ATCC 14580 / DSM 13 / JCM 2505 / CCUG 7422 / NBRC 12200 / NCIMB 9375 / NCTC 10341 / NRRL NRS-1264 / Gibson 46).